A 142-amino-acid chain; its full sequence is Hemoglobin subunit alpha (142 aa).

Residues 2–142 (VLSAADKGNV…VSTVLTSKYR (141 aa)) enclose the Globin domain. Position 4 is a phosphoserine (Ser4). 2 positions are modified to N6-succinyllysine: Lys8 and Lys12. Lys17 is subject to N6-acetyllysine; alternate. Lys17 is subject to N6-succinyllysine; alternate. Phosphotyrosine is present on Tyr25. Ser36 carries the phosphoserine modification. Lys41 carries the post-translational modification N6-succinyllysine. The residue at position 50 (Ser50) is a Phosphoserine. His59 contributes to the O2 binding site. His88 provides a ligand contact to heme b. Phosphoserine is present on Ser103. The residue at position 109 (Thr109) is a Phosphothreonine. Residue Ser125 is modified to Phosphoserine. Thr135 and Thr138 each carry phosphothreonine. Phosphoserine is present on Ser139.

The protein belongs to the globin family. As to quaternary structure, heterotetramer of two alpha chains and two beta chains. Red blood cells.

In terms of biological role, involved in oxygen transport from the lung to the various peripheral tissues. Its function is as follows. Hemopressin acts as an antagonist peptide of the cannabinoid receptor CNR1. Hemopressin-binding efficiently blocks cannabinoid receptor CNR1 and subsequent signaling. In Bos taurus (Bovine), this protein is Hemoglobin subunit alpha (HBA).